A 557-amino-acid polypeptide reads, in one-letter code: Dihydroxy-acid dehydratase (557 aa).

Cys50 contributes to the [2Fe-2S] cluster binding site. Asp82 contributes to the Mg(2+) binding site. Residue Cys123 coordinates [2Fe-2S] cluster. Mg(2+) contacts are provided by Asp124 and Lys125. Position 125 is an N6-carboxylysine (Lys125). Cys195 is a [2Fe-2S] cluster binding site. A Mg(2+)-binding site is contributed by Glu447. The active-site Proton acceptor is Ser473.

The protein belongs to the IlvD/Edd family. In terms of assembly, homodimer. [2Fe-2S] cluster serves as cofactor. It depends on Mg(2+) as a cofactor.

The catalysed reaction is (2R)-2,3-dihydroxy-3-methylbutanoate = 3-methyl-2-oxobutanoate + H2O. The enzyme catalyses (2R,3R)-2,3-dihydroxy-3-methylpentanoate = (S)-3-methyl-2-oxopentanoate + H2O. It participates in amino-acid biosynthesis; L-isoleucine biosynthesis; L-isoleucine from 2-oxobutanoate: step 3/4. Its pathway is amino-acid biosynthesis; L-valine biosynthesis; L-valine from pyruvate: step 3/4. Its function is as follows. Functions in the biosynthesis of branched-chain amino acids. Catalyzes the dehydration of (2R,3R)-2,3-dihydroxy-3-methylpentanoate (2,3-dihydroxy-3-methylvalerate) into 2-oxo-3-methylpentanoate (2-oxo-3-methylvalerate) and of (2R)-2,3-dihydroxy-3-methylbutanoate (2,3-dihydroxyisovalerate) into 2-oxo-3-methylbutanoate (2-oxoisovalerate), the penultimate precursor to L-isoleucine and L-valine, respectively. This Burkholderia pseudomallei (strain 1710b) protein is Dihydroxy-acid dehydratase.